Here is a 341-residue protein sequence, read N- to C-terminus: Methionine import ATP-binding protein MetN 1 (341 aa).

Residues 2–241 (IEFKNVNKVF…PQTNTAKNFV (240 aa)) enclose the ABC transporter domain. 38 to 45 (GYSGAGKS) is an ATP binding site.

This sequence belongs to the ABC transporter superfamily. Methionine importer (TC 3.A.1.24) family. The complex is composed of two ATP-binding proteins (MetN), two transmembrane proteins (MetI) and a solute-binding protein (MetQ).

Its subcellular location is the cell membrane. It carries out the reaction L-methionine(out) + ATP + H2O = L-methionine(in) + ADP + phosphate + H(+). It catalyses the reaction D-methionine(out) + ATP + H2O = D-methionine(in) + ADP + phosphate + H(+). Part of the ABC transporter complex MetNIQ involved in methionine import. Responsible for energy coupling to the transport system. The polypeptide is Methionine import ATP-binding protein MetN 1 (Staphylococcus epidermidis (strain ATCC 35984 / DSM 28319 / BCRC 17069 / CCUG 31568 / BM 3577 / RP62A)).